Reading from the N-terminus, the 482-residue chain is tRNA sulfurtransferase (482 aa).

A THUMP domain is found at 61–165 (VQICDALTRI…QDVLILVKAR (105 aa)). Residues 183 to 184 (LI), Lys265, Gly287, and Gln296 each bind ATP. Cys344 and Cys456 are joined by a disulfide. Residues 404-482 (FAPTDVLLDI…GFDNVKVYRP (79 aa)) enclose the Rhodanese domain. Catalysis depends on Cys456, which acts as the Cysteine persulfide intermediate.

It belongs to the ThiI family.

Its subcellular location is the cytoplasm. It catalyses the reaction [ThiI sulfur-carrier protein]-S-sulfanyl-L-cysteine + a uridine in tRNA + 2 reduced [2Fe-2S]-[ferredoxin] + ATP + H(+) = [ThiI sulfur-carrier protein]-L-cysteine + a 4-thiouridine in tRNA + 2 oxidized [2Fe-2S]-[ferredoxin] + AMP + diphosphate. It carries out the reaction [ThiS sulfur-carrier protein]-C-terminal Gly-Gly-AMP + S-sulfanyl-L-cysteinyl-[cysteine desulfurase] + AH2 = [ThiS sulfur-carrier protein]-C-terminal-Gly-aminoethanethioate + L-cysteinyl-[cysteine desulfurase] + A + AMP + 2 H(+). The protein operates within cofactor biosynthesis; thiamine diphosphate biosynthesis. Its function is as follows. Catalyzes the ATP-dependent transfer of a sulfur to tRNA to produce 4-thiouridine in position 8 of tRNAs, which functions as a near-UV photosensor. Also catalyzes the transfer of sulfur to the sulfur carrier protein ThiS, forming ThiS-thiocarboxylate. This is a step in the synthesis of thiazole, in the thiamine biosynthesis pathway. The sulfur is donated as persulfide by IscS. In Photorhabdus laumondii subsp. laumondii (strain DSM 15139 / CIP 105565 / TT01) (Photorhabdus luminescens subsp. laumondii), this protein is tRNA sulfurtransferase.